The chain runs to 865 residues: Prominin-1 (865 aa).

The signal sequence occupies residues 1–19 (MALVLGSLLLLGLCGNSFS). Topologically, residues 20–108 (GGQPSSTDAP…GLKIVYYEAG (89 aa)) are extracellular. The chain crosses the membrane as a helical span at residues 109–129 (IILCCVLGLLFIILMPLVGYF). Topologically, residues 130 to 157 (FCMCRCCNKCGGEMHQRQKENGPFLRKC) are cytoplasmic. The chain crosses the membrane as a helical span at residues 158 to 178 (FAISLLVICIIISIGIFYGFV). Over 179-433 (ANHQVRTRIK…LPTLEEYDSY (255 aa)) the chain is Extracellular. Asparagine 220 is a glycosylation site (N-linked (GlcNAc...) asparagine). Lysine 225, lysine 257, and lysine 264 each carry N6-acetyllysine. Residues asparagine 274, asparagine 395, and asparagine 414 are each glycosylated (N-linked (GlcNAc...) asparagine). The helical transmembrane segment at 434 to 454 (WWLGGLVICSLLTLIVIFYYL) threads the bilayer. Residues 455-486 (GLLCGVCGYDRHATPTTRGCVSNTGGVFLMVG) lie on the Cytoplasmic side of the membrane. A helical transmembrane segment spans residues 487–507 (VGLSFLFCWILMIIVVLTFVF). The Extracellular portion of the chain corresponds to 508-792 (GANVEKLICE…LCSYIIDPLN (285 aa)). N-linked (GlcNAc...) asparagine glycans are attached at residues asparagine 548, asparagine 580, asparagine 729, and asparagine 730. The chain crosses the membrane as a helical span at residues 793–813 (LFWFGIGKATVFLLPALIFAV). Over 814–865 (KLAKYYRRMDSEDVYDDVETIPMKNMENGNNGYHKDHVYGIHNPVMTSPSQH) the chain is Cytoplasmic. Serine 863 bears the Phosphoserine mark.

Belongs to the prominin family. Interacts with CDHR1 and with actin filaments. Interacts with NAT8 and NAT8B. Post-translationally, isoform 1 and isoform 2 are glycosylated. In terms of processing, acetylation at Lys-225, Lys-257 and Lys-264 by NAT8 and NAT8B may control PROM1 protein expression and its function in cell apoptosis. Isoform 1 is selectively expressed on CD34 hematopoietic stem and progenitor cells in adult and fetal bone marrow, fetal liver, cord blood and adult peripheral blood. Isoform 1 is not detected on other blood cells. Isoform 1 is also expressed in a number of non-lymphoid tissues including retina, pancreas, placenta, kidney, liver, lung, brain and heart. Found in saliva within small membrane particles. Isoform 2 is predominantly expressed in fetal liver, skeletal muscle, kidney, and heart as well as adult pancreas, kidney, liver, lung, and placenta. Isoform 2 is highly expressed in fetal liver, low in bone marrow, and barely detectable in peripheral blood. Isoform 2 is expressed on hematopoietic stem cells and in epidermal basal cells (at protein level). Expressed in adult retina by rod and cone photoreceptor cells (at protein level).

Its subcellular location is the apical cell membrane. The protein resides in the cell projection. It is found in the microvillus membrane. It localises to the cilium. The protein localises to the photoreceptor outer segment. Its subcellular location is the endoplasmic reticulum. The protein resides in the endoplasmic reticulum-Golgi intermediate compartment. May play a role in cell differentiation, proliferation and apoptosis. Binds cholesterol in cholesterol-containing plasma membrane microdomains and may play a role in the organization of the apical plasma membrane in epithelial cells. During early retinal development acts as a key regulator of disk morphogenesis. Involved in regulation of MAPK and Akt signaling pathways. In neuroblastoma cells suppresses cell differentiation such as neurite outgrowth in a RET-dependent manner. This chain is Prominin-1 (PROM1), found in Homo sapiens (Human).